A 233-amino-acid chain; its full sequence is MPSSAHLQDSPPLLSRTLTQNEGQTSLRQSSSCGPSATSASESLSGYTESRIPHSEMLQEKFHGIILPESPAKLLCCCAVIVVLSVAVVALSVALSVKKTPQISTVKTYAACPRNWIGVGNKCYYFNETARNWTFSQTLCKEQEAELARFDTEEELNFLRRYKGSPGCWIGLHRESSAHNWTWTDNTAYNKLLPIRGVEKHGFLSDNGISSSRDYIKRNSICSKLNSYTSQCQ.

The segment at M1 to S45 is disordered. Topologically, residues M1–K73 are cytoplasmic. The segment covering R16 to Q29 has biased composition (polar residues). Over residues S30–S43 the composition is skewed to low complexity. Residues L74 to A94 traverse the membrane as a helical; Signal-anchor for type II membrane protein segment. The Extracellular segment spans residues L95 to Q233. The C-type lectin domain occupies V119–S230. A glycan (N-linked (GlcNAc...) asparagine) is linked at N132.

It localises to the cell membrane. In terms of biological role, lectin-type cell surface receptor. This Rattus norvegicus (Rat) protein is C-type lectin domain family 2 member D6 (Clec2d6).